We begin with the raw amino-acid sequence, 410 residues long: Mannosyl phosphorylinositol ceramide synthase regulatory protein CSG2 (410 aa).

A signal peptide spans methionine 1–glutamine 17. Residues threonine 18 to serine 50 are Lumenal-facing. 2 N-linked (GlcNAc...) asparagine glycosylation sites follow: asparagine 35 and asparagine 49. A helical membrane pass occupies residues serine 51–alanine 71. Topologically, residues serine 72–lysine 141 are cytoplasmic. The chain crosses the membrane as a helical span at residues leucine 142–serine 161. Residues leucine 162–aspartate 167 lie on the Lumenal side of the membrane. The chain crosses the membrane as a helical span at residues valine 168 to cysteine 187. Topologically, residues glycine 188 to arginine 197 are cytoplasmic. A helical transmembrane segment spans residues asparagine 198–alanine 217. The Lumenal portion of the chain corresponds to threonine 218–lysine 245. The helical transmembrane segment at glycine 246–asparagine 265 threads the bilayer. Residues arginine 266–glutamine 285 are Cytoplasmic-facing. Residues serine 286–proline 305 traverse the membrane as a helical segment. The Lumenal portion of the chain corresponds to lysine 306 to serine 324. The helical transmembrane segment at phenylalanine 325–isoleucine 344 threads the bilayer. Over leucine 345 to tyrosine 355 the chain is Cytoplasmic. Residues leucine 356–cysteine 374 traverse the membrane as a helical segment. Topologically, residues glutamate 375 to glutamate 385 are lumenal. A helical membrane pass occupies residues valine 386 to glycine 404. The Cytoplasmic segment spans residues glutamate 405 to histidine 410.

Heterodimer of CSH1 and CSG2, and SUR1 and CSG2.

It is found in the endoplasmic reticulum membrane. Required for calcium regulation. May regulate calcium accumulation by a non-vacuole organelle. Also regulates the activity of CSH1 and SUR1 during mannosyl phosphorylinositol ceramide synthesis. The sequence is that of Mannosyl phosphorylinositol ceramide synthase regulatory protein CSG2 (CSG2) from Saccharomyces cerevisiae (strain ATCC 204508 / S288c) (Baker's yeast).